Reading from the N-terminus, the 217-residue chain is Large ribosomal subunit protein uL1 (217 aa).

The protein belongs to the universal ribosomal protein uL1 family. Component of the large ribosomal subunit (LSU). Mature ribosomes consist of a small (40S) and a large (60S) subunit. The 40S subunit contains about 32 different proteins and 1 molecule of RNA (18S). The 60S subunit contains 45 different proteins and 3 molecules of RNA (25S, 5.8S and 5S). uL1 forms part of the L1 stalk.

It is found in the cytoplasm. In terms of biological role, component of the ribosome, a large ribonucleoprotein complex responsible for the synthesis of proteins in the cell. The small ribosomal subunit (SSU) binds messenger RNAs (mRNAs) and translates the encoded message by selecting cognate aminoacyl-transfer RNA (tRNA) molecules. The large subunit (LSU) contains the ribosomal catalytic site termed the peptidyl transferase center (PTC), which catalyzes the formation of peptide bonds, thereby polymerizing the amino acids delivered by tRNAs into a polypeptide chain. The nascent polypeptides leave the ribosome through a tunnel in the LSU and interact with protein factors that function in enzymatic processing, targeting, and the membrane insertion of nascent chains at the exit of the ribosomal tunnel. uL1 forms part of the L1 stalk, a mobile element that plays a role in evacuating the exit-site tRNA. The chain is Large ribosomal subunit protein uL1 (RPL10A) from Candida albicans (strain SC5314 / ATCC MYA-2876) (Yeast).